A 427-amino-acid polypeptide reads, in one-letter code: BSD domain-containing protein 1 (427 aa).

Phosphoserine is present on residues Ser-92 and Ser-166. Positions 146 to 198 (WLSEFCLEEKKGEISELLVGSPSIRALYTKMVPAAVSHSEFWHRYFYKVHQLE) constitute a BSD domain. The segment at 208–397 (KQRADQSISE…ISEDWEKDFD (190 aa)) is disordered. Positions 219–229 (PGWEEEEEELE) are enriched in acidic residues. Basic and acidic residues predominate over residues 236-245 (KEAKIPKETK). Low complexity predominate over residues 268 to 279 (PAEATPSESSES). Residues 324–333 (GPPPPPPSKP) show a composition bias toward pro residues. Over residues 347 to 364 (PPARVETLREEVPTDLRV) the composition is skewed to basic and acidic residues. Thr-353 carries the phosphothreonine modification. Polar residues predominate over residues 368-387 (NSDSGKSTPSNNGKKGSSTD). 2 positions are modified to phosphoserine: Ser-384 and Ser-385. Acidic residues predominate over residues 388-397 (ISEDWEKDFD). Position 415 is a phosphoserine (Ser-415).

This Mus musculus (Mouse) protein is BSD domain-containing protein 1 (Bsdc1).